The following is a 504-amino-acid chain: Alpha-L-arabinofuranosidase C (504 aa).

Asn-81, Asn-152, Asn-269, and Asn-329 each carry an N-linked (GlcNAc...) asparagine glycan.

It belongs to the glycosyl hydrolase 51 family.

It localises to the secreted. The enzyme catalyses Hydrolysis of terminal non-reducing alpha-L-arabinofuranoside residues in alpha-L-arabinosides.. Its pathway is glycan metabolism; L-arabinan degradation. Alpha-L-arabinofuranosidase involved in the degradation of arabinoxylan, a major component of plant hemicellulose. Acts only on small linear 1,5-alpha-linked L-arabinofuranosyl oligosaccharides. This is Alpha-L-arabinofuranosidase C (abfC) from Emericella nidulans (strain FGSC A4 / ATCC 38163 / CBS 112.46 / NRRL 194 / M139) (Aspergillus nidulans).